We begin with the raw amino-acid sequence, 270 residues long: uncharacterized protein (270 aa).

A signal peptide spans 1 to 22 (MEYIKKIALYMSVLLLIIFIGG). Cysteine 23 carries N-palmitoyl cysteine lipidation. Cysteine 23 carries S-diacylglycerol cysteine lipidation.

It belongs to the staphylococcal tandem lipoprotein family.

It localises to the cell membrane. This is an uncharacterized protein from Staphylococcus aureus (strain MW2).